A 358-amino-acid polypeptide reads, in one-letter code: 4-hydroxybenzoate polyprenyltransferase, mitochondrial (358 aa).

A mitochondrion-targeting transit peptide spans 1 to 20 (MIIKPIASPARYFLRTPSWS). Transmembrane regions (helical) follow at residues 76–96 (TGTY…AYAY), 107–127 (LALF…INDL), 154–174 (AISL…QLNP), 202–222 (VVLG…LAGE), 229–249 (VVAP…TIYA), 275–295 (VLCG…IMNG), and 336–356 (NTGY…SFIY).

This sequence belongs to the UbiA prenyltransferase family. Mg(2+) is required as a cofactor.

The protein localises to the mitochondrion. Its subcellular location is the mitochondrion inner membrane. It carries out the reaction an all-trans-polyprenyl diphosphate + 4-hydroxybenzoate = a 4-hydroxy-3-(all-trans-polyprenyl)benzoate + diphosphate. The protein operates within cofactor biosynthesis; ubiquinone biosynthesis. Its function is as follows. Catalyzes the prenylation of para-hydroxybenzoate (PHB) with an all-trans polyprenyl group. Mediates the second step in the final reaction sequence of coenzyme Q (CoQ) biosynthesis, which is the condensation of the polyisoprenoid side chain with PHB, generating the first membrane-bound Q intermediate. The chain is 4-hydroxybenzoate polyprenyltransferase, mitochondrial from Schizosaccharomyces pombe (strain 972 / ATCC 24843) (Fission yeast).